Reading from the N-terminus, the 420-residue chain is 4-hydroxy-3-methylbut-2-en-1-yl diphosphate synthase (flavodoxin) (420 aa).

Positions 307, 310, 353, and 360 each coordinate [4Fe-4S] cluster.

Belongs to the IspG family. Requires [4Fe-4S] cluster as cofactor.

The catalysed reaction is (2E)-4-hydroxy-3-methylbut-2-enyl diphosphate + oxidized [flavodoxin] + H2O + 2 H(+) = 2-C-methyl-D-erythritol 2,4-cyclic diphosphate + reduced [flavodoxin]. It participates in isoprenoid biosynthesis; isopentenyl diphosphate biosynthesis via DXP pathway; isopentenyl diphosphate from 1-deoxy-D-xylulose 5-phosphate: step 5/6. Converts 2C-methyl-D-erythritol 2,4-cyclodiphosphate (ME-2,4cPP) into 1-hydroxy-2-methyl-2-(E)-butenyl 4-diphosphate. The chain is 4-hydroxy-3-methylbut-2-en-1-yl diphosphate synthase (flavodoxin) from Brucella melitensis biotype 2 (strain ATCC 23457).